Here is a 465-residue protein sequence, read N- to C-terminus: Probable protein phosphatase 2C 71 (465 aa).

3 disordered regions span residues 14–47 (RPCK…ACRA), 68–119 (RPRD…GEVT), and 133–191 (SGGA…PAEE). Residues 18–30 (LAPPPPPPLPVSP) show a composition bias toward pro residues. Composition is skewed to low complexity over residues 84-106 (AVAP…AAAE) and 133-143 (SGGAEATATSG). Residues 222–460 (ASGAAILPHP…DDIAVVVSIV (239 aa)) form the PPM-type phosphatase domain. The Mn(2+) site is built by D254, G255, D384, and D451.

It belongs to the PP2C family. It depends on Mg(2+) as a cofactor. Mn(2+) serves as cofactor.

It carries out the reaction O-phospho-L-seryl-[protein] + H2O = L-seryl-[protein] + phosphate. It catalyses the reaction O-phospho-L-threonyl-[protein] + H2O = L-threonyl-[protein] + phosphate. In Oryza sativa subsp. japonica (Rice), this protein is Probable protein phosphatase 2C 71.